Reading from the N-terminus, the 133-residue chain is Holo-[acyl-carrier-protein] synthase (133 aa).

The Mg(2+) site is built by Asp-8 and Glu-57.

This sequence belongs to the P-Pant transferase superfamily. AcpS family. It depends on Mg(2+) as a cofactor.

Its subcellular location is the cytoplasm. It carries out the reaction apo-[ACP] + CoA = holo-[ACP] + adenosine 3',5'-bisphosphate + H(+). In terms of biological role, transfers the 4'-phosphopantetheine moiety from coenzyme A to a Ser of acyl-carrier-protein. This chain is Holo-[acyl-carrier-protein] synthase, found in Bartonella henselae (strain ATCC 49882 / DSM 28221 / CCUG 30454 / Houston 1) (Rochalimaea henselae).